The sequence spans 547 residues: Phosphomethylpyrimidine synthase (547 aa).

Substrate contacts are provided by residues asparagine 146, methionine 175, tyrosine 204, histidine 240, serine 260–glycine 262, aspartate 301–arginine 304, and glutamate 340. Position 344 (histidine 344) interacts with Zn(2+). Tyrosine 367 is a substrate binding site. Histidine 408 contributes to the Zn(2+) binding site. Residues cysteine 488, cysteine 491, and cysteine 496 each coordinate [4Fe-4S] cluster.

The protein belongs to the ThiC family. Requires [4Fe-4S] cluster as cofactor.

The catalysed reaction is 5-amino-1-(5-phospho-beta-D-ribosyl)imidazole + S-adenosyl-L-methionine = 4-amino-2-methyl-5-(phosphooxymethyl)pyrimidine + CO + 5'-deoxyadenosine + formate + L-methionine + 3 H(+). It participates in cofactor biosynthesis; thiamine diphosphate biosynthesis. In terms of biological role, catalyzes the synthesis of the hydroxymethylpyrimidine phosphate (HMP-P) moiety of thiamine from aminoimidazole ribotide (AIR) in a radical S-adenosyl-L-methionine (SAM)-dependent reaction. The sequence is that of Phosphomethylpyrimidine synthase from Mycobacterium bovis (strain ATCC BAA-935 / AF2122/97).